The chain runs to 732 residues: Photosystem I P700 chlorophyll a apoprotein A2 (732 aa).

8 helical membrane passes run 46 to 69 (IFAS…FHVA), 133 to 156 (LYTG…LHIQ), 173 to 197 (LNHH…HVAI), 271 to 289 (MAHH…GHMY), 328 to 351 (LHFQ…QHMY), 367 to 393 (SALY…IFFI), 415 to 437 (AVIS…LYVH), and 515 to 533 (FLVH…LILV). [4Fe-4S] cluster is bound by residues C557 and C566. Transmembrane regions (helical) follow at residues 573–594 (AFYL…YWHW) and 641–663 (LAVW…MFLI). Positions 652, 660, and 668 each coordinate chlorophyll a. Phylloquinone is bound at residue W669. The helical transmembrane segment at 705–725 (LVGLVHFTVGYILTYAAFVIA) threads the bilayer.

Belongs to the PsaA/PsaB family. As to quaternary structure, the PsaA/B heterodimer binds the P700 chlorophyll special pair and subsequent electron acceptors. PSI consists of a core antenna complex that captures photons, and an electron transfer chain that converts photonic excitation into a charge separation. The eukaryotic PSI reaction center is composed of at least 11 subunits. Requires P700 is a chlorophyll a/chlorophyll a' dimer, A0 is one or more chlorophyll a, A1 is one or both phylloquinones and FX is a shared 4Fe-4S iron-sulfur center. as cofactor.

The protein localises to the plastid. The protein resides in the chloroplast thylakoid membrane. The enzyme catalyses reduced [plastocyanin] + hnu + oxidized [2Fe-2S]-[ferredoxin] = oxidized [plastocyanin] + reduced [2Fe-2S]-[ferredoxin]. In terms of biological role, psaA and PsaB bind P700, the primary electron donor of photosystem I (PSI), as well as the electron acceptors A0, A1 and FX. PSI is a plastocyanin/cytochrome c6-ferredoxin oxidoreductase, converting photonic excitation into a charge separation, which transfers an electron from the donor P700 chlorophyll pair to the spectroscopically characterized acceptors A0, A1, FX, FA and FB in turn. Oxidized P700 is reduced on the lumenal side of the thylakoid membrane by plastocyanin or cytochrome c6. The polypeptide is Photosystem I P700 chlorophyll a apoprotein A2 (Cyanidioschyzon merolae (strain NIES-3377 / 10D) (Unicellular red alga)).